Here is a 728-residue protein sequence, read N- to C-terminus: 1,4-alpha-glucan branching enzyme GlgB (728 aa).

The active-site Nucleophile is the Asp-405. Glu-458 acts as the Proton donor in catalysis. Residues 686–712 (YHGSNAGNAGAVQSDEHESHGRPHSLS) are disordered.

Belongs to the glycosyl hydrolase 13 family. GlgB subfamily. In terms of assembly, monomer.

It carries out the reaction Transfers a segment of a (1-&gt;4)-alpha-D-glucan chain to a primary hydroxy group in a similar glucan chain.. It functions in the pathway glycan biosynthesis; glycogen biosynthesis. In terms of biological role, catalyzes the formation of the alpha-1,6-glucosidic linkages in glycogen by scission of a 1,4-alpha-linked oligosaccharide from growing alpha-1,4-glucan chains and the subsequent attachment of the oligosaccharide to the alpha-1,6 position. The protein is 1,4-alpha-glucan branching enzyme GlgB of Enterobacter sp. (strain 638).